We begin with the raw amino-acid sequence, 270 residues long: Shikimate dehydrogenase (NADP(+)) (270 aa).

Residues 15 to 17 (SKS) and Thr-62 contribute to the shikimate site. Lys-66 (proton acceptor) is an active-site residue. Shikimate is bound by residues Asn-87 and Asp-102. NADP(+) is bound by residues 127 to 131 (GAGGA), 151 to 156 (NRTVAR), and Met-214. Tyr-216 is a shikimate binding site. Gly-238 is an NADP(+) binding site.

Belongs to the shikimate dehydrogenase family. Homodimer.

It carries out the reaction shikimate + NADP(+) = 3-dehydroshikimate + NADPH + H(+). It participates in metabolic intermediate biosynthesis; chorismate biosynthesis; chorismate from D-erythrose 4-phosphate and phosphoenolpyruvate: step 4/7. Its function is as follows. Involved in the biosynthesis of the chorismate, which leads to the biosynthesis of aromatic amino acids. Catalyzes the reversible NADPH linked reduction of 3-dehydroshikimate (DHSA) to yield shikimate (SA). This is Shikimate dehydrogenase (NADP(+)) from Alkalilimnicola ehrlichii (strain ATCC BAA-1101 / DSM 17681 / MLHE-1).